A 383-amino-acid chain; its full sequence is Delta(12)-fatty-acid desaturase FAD2 (383 aa).

A run of 2 helical transmembrane segments spans residues 56–76 and 84–104; these read VVYD…YFHL and VAWP…WVIA. The Histidine box-1 signature appears at 105–109; it reads HECGH. Residues 117-137 traverse the membrane as a helical segment; sequence LLDDIVGLVLHSCLLVPYFSW. The short motif at 141–145 is the Histidine box-2 element; the sequence is HRRHH. The next 3 helical transmembrane spans lie at 179–199, 225–245, and 249–269; these read LFTL…FNVS, IYIS…LAAA, and AWVI…LVMI. Positions 315-319 match the Histidine box-3 motif; that stretch reads HVAHH.

This sequence belongs to the fatty acid desaturase type 1 family. In terms of tissue distribution, expressed in leaves and seeds.

It is found in the endoplasmic reticulum membrane. The enzyme catalyses (9Z)-octadecenoyl-CoA + 2 Fe(II)-[cytochrome b5] + O2 + 2 H(+) = (9Z,12Z)-octadecadienoyl-CoA + 2 Fe(III)-[cytochrome b5] + 2 H2O. It catalyses the reaction (9Z)-hexadecenoyl-CoA + 2 Fe(II)-[cytochrome b5] + O2 + 2 H(+) = (9Z,12Z)-hexadecadienoyl-CoA + 2 Fe(III)-[cytochrome b5] + 2 H2O. The protein operates within lipid metabolism; polyunsaturated fatty acid biosynthesis. In terms of biological role, catalyzes the desaturation of oleic acid (18:1(9Z)) to linoleic acid (18:2(9Z,12Z)). The chain is Delta(12)-fatty-acid desaturase FAD2 from Vernicia fordii (Tung).